The following is a 172-amino-acid chain: MAEKRNIFLVGPMGAGKSTIGRHLAQQLHMEFLDSDTVIEERTGADIAWVFDVEGEEGFRIREEGVINDLTQEQGIVLATGGGSVISKESRNRLSARGVVVYLETTIEKQLARTQRDKKRPLLQTDEPREVLEALAKERNALYEEVSDYVVRTDDQSAKVVANQIIQMLEER.

Position 14–19 (14–19 (GAGKST)) interacts with ATP. Mg(2+) is bound at residue Ser18. Substrate-binding residues include Asp36, Arg60, and Gly82. Position 120 (Arg120) interacts with ATP. Arg139 is a substrate binding site. Gln156 is a binding site for ATP.

Belongs to the shikimate kinase family. Monomer. Mg(2+) serves as cofactor.

Its subcellular location is the cytoplasm. It carries out the reaction shikimate + ATP = 3-phosphoshikimate + ADP + H(+). It participates in metabolic intermediate biosynthesis; chorismate biosynthesis; chorismate from D-erythrose 4-phosphate and phosphoenolpyruvate: step 5/7. Its function is as follows. Catalyzes the specific phosphorylation of the 3-hydroxyl group of shikimic acid using ATP as a cosubstrate. The chain is Shikimate kinase from Aliivibrio salmonicida (strain LFI1238) (Vibrio salmonicida (strain LFI1238)).